The chain runs to 406 residues: Bifunctional enzyme IspD/IspF (406 aa).

The segment at 1 to 246 is 2-C-methyl-D-erythritol 4-phosphate cytidylyltransferase; it reads MTQMHSTQPM…KLSAGLLPDV (246 aa). Positions 247–406 are 2-C-methyl-D-erythritol 2,4-cyclodiphosphate synthase; the sequence is RTGNGYDVHQ…ATVVYRGGRP (160 aa). Positions 253 and 255 each coordinate a divalent metal cation. 4-CDP-2-C-methyl-D-erythritol 2-phosphate contacts are provided by residues 253 to 255 and 279 to 280; these read DVH and HS. Histidine 287 contributes to the a divalent metal cation binding site. Residues 301 to 303, 377 to 380, phenylalanine 384, and arginine 387 contribute to the 4-CDP-2-C-methyl-D-erythritol 2-phosphate site; these read DIG and TTNE.

It in the N-terminal section; belongs to the IspD/TarI cytidylyltransferase family. IspD subfamily. This sequence in the C-terminal section; belongs to the IspF family. A divalent metal cation is required as a cofactor.

The enzyme catalyses 2-C-methyl-D-erythritol 4-phosphate + CTP + H(+) = 4-CDP-2-C-methyl-D-erythritol + diphosphate. The catalysed reaction is 4-CDP-2-C-methyl-D-erythritol 2-phosphate = 2-C-methyl-D-erythritol 2,4-cyclic diphosphate + CMP. Its pathway is isoprenoid biosynthesis; isopentenyl diphosphate biosynthesis via DXP pathway; isopentenyl diphosphate from 1-deoxy-D-xylulose 5-phosphate: step 2/6. It participates in isoprenoid biosynthesis; isopentenyl diphosphate biosynthesis via DXP pathway; isopentenyl diphosphate from 1-deoxy-D-xylulose 5-phosphate: step 4/6. Bifunctional enzyme that catalyzes the formation of 4-diphosphocytidyl-2-C-methyl-D-erythritol from CTP and 2-C-methyl-D-erythritol 4-phosphate (MEP) (IspD), and catalyzes the conversion of 4-diphosphocytidyl-2-C-methyl-D-erythritol 2-phosphate (CDP-ME2P) to 2-C-methyl-D-erythritol 2,4-cyclodiphosphate (ME-CPP) with a corresponding release of cytidine 5-monophosphate (CMP) (IspF). This chain is Bifunctional enzyme IspD/IspF, found in Rhizobium rhizogenes (strain K84 / ATCC BAA-868) (Agrobacterium radiobacter).